A 344-amino-acid chain; its full sequence is MRKSVKVGKVVIGGEAPVSVQSMTTTKTADVEKTVSQIKSLERAGCEIVRVAVQDEEDAKAIRRIKEQIEIPLVADIQFDYRLAILSIENGADKIRINPGNMSRDRLKDVVAAAKGKGIPIRVGANVGSIKRRTSERWKDLAESALEEVRLLEKEGFYDIIVSVKSSDVLETIKANEYIAEKVEYPIHLGVTEAGVSETAIVKSSIAIGHLLLKNIGDTIRVSISGDPVREVIVGKKILIALGLREGVEVIACPTCGRAEIDVENMAKMIEENFFHVQKRLKIAVMGCVVNGIGEGKDADLGVAGLRDGAVIFVKGEIKERVSKEFVLERLKYYLNELLEEVER.

Residues C253, C256, C288, and E295 each coordinate [4Fe-4S] cluster.

Belongs to the IspG family. [4Fe-4S] cluster serves as cofactor.

The catalysed reaction is (2E)-4-hydroxy-3-methylbut-2-enyl diphosphate + oxidized [flavodoxin] + H2O + 2 H(+) = 2-C-methyl-D-erythritol 2,4-cyclic diphosphate + reduced [flavodoxin]. It participates in isoprenoid biosynthesis; isopentenyl diphosphate biosynthesis via DXP pathway; isopentenyl diphosphate from 1-deoxy-D-xylulose 5-phosphate: step 5/6. In terms of biological role, converts 2C-methyl-D-erythritol 2,4-cyclodiphosphate (ME-2,4cPP) into 1-hydroxy-2-methyl-2-(E)-butenyl 4-diphosphate. The protein is 4-hydroxy-3-methylbut-2-en-1-yl diphosphate synthase (flavodoxin) of Thermotoga maritima (strain ATCC 43589 / DSM 3109 / JCM 10099 / NBRC 100826 / MSB8).